Here is an 81-residue protein sequence, read N- to C-terminus: Acyl carrier protein (81 aa).

A Carrier domain is found at 2-80; sequence SKVDNIEQKV…DVVNYIKEHK (79 aa). Serine 40 carries the O-(pantetheine 4'-phosphoryl)serine modification.

It belongs to the acyl carrier protein (ACP) family. 4'-phosphopantetheine is transferred from CoA to a specific serine of apo-ACP by AcpS. This modification is essential for activity because fatty acids are bound in thioester linkage to the sulfhydryl of the prosthetic group.

The protein localises to the cytoplasm. The protein operates within lipid metabolism; fatty acid biosynthesis. In terms of biological role, carrier of the growing fatty acid chain in fatty acid biosynthesis. The sequence is that of Acyl carrier protein from Rickettsia bellii (strain OSU 85-389).